The chain runs to 204 residues: Gellan lyase (204 aa).

In terms of assembly, multimer.

It localises to the secreted. The catalysed reaction is Eliminative cleavage of beta-D-glucopyranosyl-(1-&gt;4)-beta-D-glucopyranosyluronate bonds of gellan backbone releasing tetrasaccharides containing a 4-deoxy-4,5-unsaturated D-glucopyranosyluronic acid at the non-reducing end. The tetrasaccharide produced from deacetylated gellan is beta-D-4-deoxy-Delta(4)-GlcAp-(1-&gt;4)-beta-D-Glcp-(1-&gt;4)-alpha-L-Rhap-(1-&gt;3)-beta-D-Glcp.. Its activity is regulated as follows. Activity is stimulated by zinc, potassium, lithium, cobalt, sodium, calcium, iron, manganase, magnesium and mercury ions at a concentration of 1 mM, but inhibited by copper ions at a concentration of 1 mM. Activity is inhibited by potassium, sodium and magnesium ions at a concentration of 1 M. Activity is inhibited by urea, EDTA, dithiothreitol, p-CMB, PSF, natrium lauryl sulfate and N-bromosuccinimide. Cleaves the glycosidic bonds of gellan backbone and releases tetrasaccharide units of glucuronyl-glucosyl-rhamnosyl-glucose with unsaturated glucuronic acid at the non-reducing terminal. The enzyme is highly specific to the heteropolysaccharide gellan. The protein is Gellan lyase of Geobacillus stearothermophilus (Bacillus stearothermophilus).